The sequence spans 430 residues: Adenylosuccinate synthetase (430 aa).

GTP contacts are provided by residues 12 to 18 (GDEGKGK) and 40 to 42 (GHT). Aspartate 13 functions as the Proton acceptor in the catalytic mechanism. Positions 13 and 40 each coordinate Mg(2+). IMP-binding positions include 13–16 (DEGK), 38–41 (NAGH), threonine 128, arginine 142, glutamine 223, threonine 238, and arginine 302. Residue histidine 41 is the Proton donor of the active site. 298–304 (TTTGRPR) contacts substrate. GTP-binding positions include arginine 304, 330–332 (SID), and 413–415 (SVG).

It belongs to the adenylosuccinate synthetase family. Homodimer. Mg(2+) is required as a cofactor.

The protein localises to the cytoplasm. It catalyses the reaction IMP + L-aspartate + GTP = N(6)-(1,2-dicarboxyethyl)-AMP + GDP + phosphate + 2 H(+). The protein operates within purine metabolism; AMP biosynthesis via de novo pathway; AMP from IMP: step 1/2. Functionally, plays an important role in the de novo pathway of purine nucleotide biosynthesis. Catalyzes the first committed step in the biosynthesis of AMP from IMP. The polypeptide is Adenylosuccinate synthetase (Lactococcus lactis subsp. cremoris (strain SK11)).